Reading from the N-terminus, the 131-residue chain is Sec-independent protein translocase protein TatB (131 aa).

The chain crosses the membrane as a helical span at residues Phe2 to Gly22. The segment at Asp90–Thr131 is disordered. The segment covering Asp96–Asp106 has biased composition (basic and acidic residues).

Belongs to the TatB family. In terms of assembly, the Tat system comprises two distinct complexes: a TatABC complex, containing multiple copies of TatA, TatB and TatC subunits, and a separate TatA complex, containing only TatA subunits. Substrates initially bind to the TatABC complex, which probably triggers association of the separate TatA complex to form the active translocon.

The protein resides in the cell membrane. In terms of biological role, part of the twin-arginine translocation (Tat) system that transports large folded proteins containing a characteristic twin-arginine motif in their signal peptide across membranes. Together with TatC, TatB is part of a receptor directly interacting with Tat signal peptides. TatB may form an oligomeric binding site that transiently accommodates folded Tat precursor proteins before their translocation. The chain is Sec-independent protein translocase protein TatB from Mycobacterium bovis (strain ATCC BAA-935 / AF2122/97).